A 147-amino-acid polypeptide reads, in one-letter code: Large ribosomal subunit protein bL9 (147 aa).

The protein belongs to the bacterial ribosomal protein bL9 family.

In terms of biological role, binds to the 23S rRNA. The chain is Large ribosomal subunit protein bL9 from Exiguobacterium sp. (strain ATCC BAA-1283 / AT1b).